The following is an 84-amino-acid chain: Large ribosomal subunit protein bL27 (84 aa).

The protein belongs to the bacterial ribosomal protein bL27 family.

This chain is Large ribosomal subunit protein bL27, found in Buchnera aphidicola subsp. Schizaphis graminum (strain Sg).